The sequence spans 2207 residues: Desmoplakin-B (2207 aa).

Coiled-coil stretches lie at residues 506–916, 952–1000, and 1029–1063; these read MEEL…EAGK, AKHA…EQGR, and TERL…LLKN. The span at 905–924 shows a compositional bias: basic and acidic residues; that stretch reads KQRQVAEEEAGKRRRTESQL. Residues 905 to 933 form a disordered region; the sequence is KQRQVAEEEAGKRRRTESQLEKSSQAMRE. Plectin repeat units lie at residues 1369 to 1406, 1407 to 1445, 1446 to 1483, 1571 to 1609, 1610 to 1647, 1685 to 1723, 1783 to 1811, 1992 to 2029, and 2068 to 2106; these read LLEA…DKKQ, LLIA…TLRL, LQAQ…YQAL, YLRG…TLEL, LEAQ…KDKL, LLEA…NQIL, IVDP…FLEL, LLEA…MANR, and FLEF…AQRL. Residues 2155–2164 are compositionally biased toward polar residues; sequence ISSPYNLSNP. Residues 2155 to 2207 are disordered; that stretch reads ISSPYNLSNPGSASGSRSGSRRGSVDYSLSPSSSSRYSSFSYSRTSFSSRSLS. Low complexity predominate over residues 2165–2207; that stretch reads GSASGSRSGSRRGSVDYSLSPSSSSRYSSFSYSRTSFSSRSLS.

It belongs to the plakin or cytolinker family.

It is found in the cell junction. It localises to the desmosome. The protein localises to the cell membrane. Its function is as follows. Involved in the organization of desmosome cell-cell junctions. Of particular importance in cell adhesion in the skin and during cardiac development. May also play a role in the regulation of Wnt, TGF-beta and Hippo signaling pathways. This chain is Desmoplakin-B, found in Danio rerio (Zebrafish).